Here is a 209-residue protein sequence, read N- to C-terminus: Ribosomal RNA large subunit methyltransferase E (209 aa).

Positions 63, 65, 83, 99, and 124 each coordinate S-adenosyl-L-methionine. The Proton acceptor role is filled by lysine 164.

It belongs to the class I-like SAM-binding methyltransferase superfamily. RNA methyltransferase RlmE family.

It is found in the cytoplasm. The catalysed reaction is uridine(2552) in 23S rRNA + S-adenosyl-L-methionine = 2'-O-methyluridine(2552) in 23S rRNA + S-adenosyl-L-homocysteine + H(+). Specifically methylates the uridine in position 2552 of 23S rRNA at the 2'-O position of the ribose in the fully assembled 50S ribosomal subunit. The polypeptide is Ribosomal RNA large subunit methyltransferase E (Shewanella sp. (strain ANA-3)).